Consider the following 357-residue polypeptide: DNA replication and repair protein RecF (357 aa).

30 to 37 serves as a coordination point for ATP; it reads GANGSGKT.

The protein belongs to the RecF family.

The protein resides in the cytoplasm. In terms of biological role, the RecF protein is involved in DNA metabolism; it is required for DNA replication and normal SOS inducibility. RecF binds preferentially to single-stranded, linear DNA. It also seems to bind ATP. The chain is DNA replication and repair protein RecF from Salmonella arizonae (strain ATCC BAA-731 / CDC346-86 / RSK2980).